The following is a 292-amino-acid chain: 4-hydroxy-tetrahydrodipicolinate synthase (292 aa).

Residue Thr45 participates in pyruvate binding. Tyr133 functions as the Proton donor/acceptor in the catalytic mechanism. Residue Lys161 is the Schiff-base intermediate with substrate of the active site. Ile203 provides a ligand contact to pyruvate.

It belongs to the DapA family. As to quaternary structure, homotetramer; dimer of dimers.

Its subcellular location is the cytoplasm. It catalyses the reaction L-aspartate 4-semialdehyde + pyruvate = (2S,4S)-4-hydroxy-2,3,4,5-tetrahydrodipicolinate + H2O + H(+). It functions in the pathway amino-acid biosynthesis; L-lysine biosynthesis via DAP pathway; (S)-tetrahydrodipicolinate from L-aspartate: step 3/4. Its function is as follows. Catalyzes the condensation of (S)-aspartate-beta-semialdehyde [(S)-ASA] and pyruvate to 4-hydroxy-tetrahydrodipicolinate (HTPA). The sequence is that of 4-hydroxy-tetrahydrodipicolinate synthase from Cronobacter sakazakii (strain ATCC BAA-894) (Enterobacter sakazakii).